Reading from the N-terminus, the 202-residue chain is Putative NADH dehydrogenase/NAD(P)H nitroreductase SCO7141 (202 aa).

This sequence belongs to the nitroreductase family. HadB/RutE subfamily. The cofactor is FMN.

The chain is Putative NADH dehydrogenase/NAD(P)H nitroreductase SCO7141 from Streptomyces coelicolor (strain ATCC BAA-471 / A3(2) / M145).